Here is a 618-residue protein sequence, read N- to C-terminus: DNA mismatch repair protein MutL (618 aa).

Residues 367–381 show a composition bias toward low complexity; the sequence is EPTAAREPATPRYSG. Positions 367–402 are disordered; the sequence is EPTAAREPATPRYSGGASGGNGGRQSAGGWPHAQPG. Gly residues predominate over residues 382 to 392; the sequence is GASGGNGGRQS.

Belongs to the DNA mismatch repair MutL/HexB family.

This protein is involved in the repair of mismatches in DNA. It is required for dam-dependent methyl-directed DNA mismatch repair. May act as a 'molecular matchmaker', a protein that promotes the formation of a stable complex between two or more DNA-binding proteins in an ATP-dependent manner without itself being part of a final effector complex. The chain is DNA mismatch repair protein MutL from Salmonella gallinarum (strain 287/91 / NCTC 13346).